The chain runs to 255 residues: MRILIILSIILCSLFTKADLEYVDDDIYNYNGSSNINGCREVYDPYEKFNRKIFAFNSVLDYIFLRPLAVGYKNLTNDYMKARVNSFVGNIDMPLTAVNYGLQLNYDKTMKSVWRFIINTTLGIGGLFDVAGKVGLSSDRQTFGNTLAHYGVGPGPYLVLPIIGSTNARDMTDPIFTNYALNPLMYYTHKDFELSVLAVSKINDRYNVLSFSDYVMKNSLDPYATIRSALHQAREASVQYPKNFKCPKPKNVNSN.

The N-terminal stretch at 1–18 (MRILIILSIILCSLFTKA) is a signal peptide.

The protein belongs to the MlaA family.

This is an uncharacterized protein from Rickettsia bellii (strain RML369-C).